Consider the following 167-residue polypeptide: Small ribosomal subunit protein uS9 (167 aa).

The disordered stretch occupies residues K136–R167. Over residues R143–K152 the composition is skewed to basic and acidic residues. Positions Y153–R167 are enriched in basic residues.

The protein belongs to the universal ribosomal protein uS9 family.

This Nocardia farcinica (strain IFM 10152) protein is Small ribosomal subunit protein uS9.